Here is a 164-residue protein sequence, read N- to C-terminus: Thioredoxin domain-containing protein R443 (164 aa).

The chain crosses the membrane as a helical span at residues 8-28 (HIVLIVLAIILILWIISLLLC). The Thioredoxin domain occupies 36 to 163 (YQVPIIQPMQ…LTQFIRSNMN (128 aa)). An intrachain disulfide couples C84 to C87.

It belongs to the thioredoxin family.

It is found in the host membrane. It localises to the virion. The sequence is that of Thioredoxin domain-containing protein R443 from Acanthamoeba polyphaga mimivirus (APMV).